We begin with the raw amino-acid sequence, 276 residues long: Inositol-1-monophosphatase ImpA (276 aa).

Mg(2+) contacts are provided by glutamate 74, aspartate 90, isoleucine 92, and aspartate 93. Residue glutamate 74 coordinates substrate. Substrate contacts are provided by residues 92–95, arginine 192, and aspartate 221; that span reads IDGT. Aspartate 221 lines the Mg(2+) pocket.

This sequence belongs to the inositol monophosphatase superfamily. The cofactor is Mg(2+).

The catalysed reaction is a myo-inositol phosphate + H2O = myo-inositol + phosphate. It functions in the pathway polyol metabolism; myo-inositol biosynthesis; myo-inositol from D-glucose 6-phosphate: step 2/2. Its function is as follows. Catalyzes the dephosphorylation of inositol 1-phosphate (I-1-P) to yield free myo-inositol, a key metabolite in mycobacteria. This chain is Inositol-1-monophosphatase ImpA (impA), found in Mycolicibacterium smegmatis (strain ATCC 700084 / mc(2)155) (Mycobacterium smegmatis).